We begin with the raw amino-acid sequence, 1414 residues long: DNA-directed RNA polymerase subunit beta' (1414 aa).

The Zn(2+) site is built by C70, C72, C85, and C88. Residues D461, D463, and D465 each contribute to the Mg(2+) site. Positions 820, 894, 901, and 904 each coordinate Zn(2+).

Belongs to the RNA polymerase beta' chain family. In terms of assembly, the RNAP catalytic core consists of 2 alpha, 1 beta, 1 beta' and 1 omega subunit. When a sigma factor is associated with the core the holoenzyme is formed, which can initiate transcription. It depends on Mg(2+) as a cofactor. Zn(2+) is required as a cofactor.

The enzyme catalyses RNA(n) + a ribonucleoside 5'-triphosphate = RNA(n+1) + diphosphate. Functionally, DNA-dependent RNA polymerase catalyzes the transcription of DNA into RNA using the four ribonucleoside triphosphates as substrates. The polypeptide is DNA-directed RNA polymerase subunit beta' (Cupriavidus taiwanensis (strain DSM 17343 / BCRC 17206 / CCUG 44338 / CIP 107171 / LMG 19424 / R1) (Ralstonia taiwanensis (strain LMG 19424))).